Reading from the N-terminus, the 581-residue chain is ATP-dependent lipid A-core flippase (581 aa).

6 helical membrane passes run 21–41 (TVAIVAIIGMIGYSGMDALFI), 65–85 (FVVIALVIGRGVFNFMSSYCL), 138–158 (ALLIVVREGAFVVFLLAVMFY), 161–181 (WQLSLIFLVIIPLVAVIVTVV), 246–266 (LSVSIIQVLAASAMAVILWVV), and 271–291 (MIDTISSGDFVVLISSMMMLL). The ABC transmembrane type-1 domain occupies 24–306 (IVAIIGMIGY…LANVNSDMQR (283 aa)). The region spanning 338 to 575 (IEVKNVTFKY…NGTYSALCKM (238 aa)) is the ABC transporter domain. Residue 372–379 (GRSGSGKS) participates in ATP binding.

Belongs to the ABC transporter superfamily. Lipid exporter (TC 3.A.1.106) family. In terms of assembly, homodimer.

It localises to the cell inner membrane. The catalysed reaction is ATP + H2O + lipid A-core oligosaccharideSide 1 = ADP + phosphate + lipid A-core oligosaccharideSide 2.. In terms of biological role, involved in lipopolysaccharide (LPS) biosynthesis. Translocates lipid A-core from the inner to the outer leaflet of the inner membrane. Transmembrane domains (TMD) form a pore in the inner membrane and the ATP-binding domain (NBD) is responsible for energy generation. This is ATP-dependent lipid A-core flippase from Pseudoalteromonas translucida (strain TAC 125).